The sequence spans 431 residues: Glutamyl-tRNA(Gln) amidotransferase subunit A (431 aa).

Catalysis depends on charge relay system residues Lys-55 and Ser-130. Ser-154 functions as the Acyl-ester intermediate in the catalytic mechanism.

It belongs to the amidase family. GatA subfamily. Heterotrimer of A, B and C subunits.

It carries out the reaction L-glutamyl-tRNA(Gln) + L-glutamine + ATP + H2O = L-glutaminyl-tRNA(Gln) + L-glutamate + ADP + phosphate + H(+). Its function is as follows. Allows the formation of correctly charged Gln-tRNA(Gln) through the transamidation of misacylated Glu-tRNA(Gln) in organisms which lack glutaminyl-tRNA synthetase. The reaction takes place in the presence of glutamine and ATP through an activated gamma-phospho-Glu-tRNA(Gln). The polypeptide is Glutamyl-tRNA(Gln) amidotransferase subunit A (Methanococcus vannielii (strain ATCC 35089 / DSM 1224 / JCM 13029 / OCM 148 / SB)).